The following is a 282-amino-acid chain: Probable endonuclease 4 (282 aa).

Positions 69, 109, 145, 179, 182, 216, 229, 231, and 261 each coordinate Zn(2+).

It belongs to the AP endonuclease 2 family. Zn(2+) serves as cofactor.

It carries out the reaction Endonucleolytic cleavage to 5'-phosphooligonucleotide end-products.. Its function is as follows. Endonuclease IV plays a role in DNA repair. It cleaves phosphodiester bonds at apurinic or apyrimidinic (AP) sites, generating a 3'-hydroxyl group and a 5'-terminal sugar phosphate. This chain is Probable endonuclease 4, found in Campylobacter fetus subsp. fetus (strain 82-40).